Reading from the N-terminus, the 103-residue chain is MILTTTPNIEGKPVLEYLGIVTGEAIMGANIVRDFFAAVTDIVGGRSGAYEQKLSHARQIALNEMAEEARRLGANAVVGIDIDYEVVRDGMLMVTASGTAVKI.

The protein belongs to the UPF0145 family.

The sequence is that of UPF0145 protein PTH_2690 from Pelotomaculum thermopropionicum (strain DSM 13744 / JCM 10971 / SI).